Consider the following 221-residue polypeptide: Ribonuclease T (221 aa).

One can recognise an Exonuclease domain in the interval 20 to 194 (VVIDVETAGF…YDTERTAELF (175 aa)). 4 residues coordinate Mg(2+): Asp23, Glu25, His181, and Asp186. His181 serves as the catalytic Proton donor/acceptor.

This sequence belongs to the RNase T family. Homodimer. It depends on Mg(2+) as a cofactor.

In terms of biological role, trims short 3' overhangs of a variety of RNA species, leaving a one or two nucleotide 3' overhang. Responsible for the end-turnover of tRNA: specifically removes the terminal AMP residue from uncharged tRNA (tRNA-C-C-A). Also appears to be involved in tRNA biosynthesis. The polypeptide is Ribonuclease T (Shewanella frigidimarina (strain NCIMB 400)).